The primary structure comprises 85 residues: Makatoxin-3 (85 aa).

The N-terminal stretch at 1-19 is a signal peptide; the sequence is MNYLIVISFALLLMTGVES. In terms of domain architecture, LCN-type CS-alpha/beta spans 21–83; the sequence is RDAYIAKKEN…VPIRIPGPCI (63 aa). Disulfide bonds link Cys31-Cys82, Cys35-Cys55, Cys41-Cys65, and Cys45-Cys67.

The protein belongs to the long (4 C-C) scorpion toxin superfamily. Sodium channel inhibitor family. Alpha subfamily. As to expression, expressed by the venom gland.

Its subcellular location is the secreted. Functionally, this protein markedly relaxes the rat carbachol-precontracted anococcygeus muscle. This relaxation is inhibited by the inhibitor of nitric oxide (NO) synthase, N-nitro-L-arginine methyl ester (L-NAME), suggesting that the response induced by this protein is NO-mediated. The protein is Makatoxin-3 of Olivierus martensii (Manchurian scorpion).